The chain runs to 332 residues: Anthranilate phosphoribosyltransferase (332 aa).

Residues G80, 83–84, T88, 90–93, 108–116, and S120 each bind 5-phospho-alpha-D-ribose 1-diphosphate; these read GD, NLST, and KHGNRSASG. Position 80 (G80) interacts with anthranilate. S92 serves as a coordination point for Mg(2+). N111 contacts anthranilate. R166 lines the anthranilate pocket. Mg(2+) is bound by residues D224 and E225.

The protein belongs to the anthranilate phosphoribosyltransferase family. In terms of assembly, homodimer. Mg(2+) is required as a cofactor.

The enzyme catalyses N-(5-phospho-beta-D-ribosyl)anthranilate + diphosphate = 5-phospho-alpha-D-ribose 1-diphosphate + anthranilate. It participates in amino-acid biosynthesis; L-tryptophan biosynthesis; L-tryptophan from chorismate: step 2/5. Functionally, catalyzes the transfer of the phosphoribosyl group of 5-phosphorylribose-1-pyrophosphate (PRPP) to anthranilate to yield N-(5'-phosphoribosyl)-anthranilate (PRA). This Pyrobaculum calidifontis (strain DSM 21063 / JCM 11548 / VA1) protein is Anthranilate phosphoribosyltransferase.